Here is a 522-residue protein sequence, read N- to C-terminus: Ribonuclease Y (522 aa).

The helical transmembrane segment at 7–23 (SGSSAAVISGLVGFYIS) threads the bilayer. The KH domain occupies 212-278 (LTNLVHLNDD…TKTLELLIQD (67 aa)). In terms of domain architecture, HD spans 338–431 (ALSHTLEVAH…VCAADALSAA (94 aa)).

This sequence belongs to the RNase Y family.

It localises to the cell membrane. In terms of biological role, endoribonuclease that initiates mRNA decay. This Sulfurimonas denitrificans (strain ATCC 33889 / DSM 1251) (Thiomicrospira denitrificans (strain ATCC 33889 / DSM 1251)) protein is Ribonuclease Y.